Reading from the N-terminus, the 259-residue chain is Protein unc-50 homolog (259 aa).

Met-1 is modified (N-acetylmethionine). Over 1-82 the chain is Cytoplasmic; that stretch reads MLPSTSLNSS…TKDQWARDDP (82 aa). Residue Ser-6 is modified to Phosphoserine. The helical transmembrane segment at 83–103 threads the bilayer; it reads AFLVLLSIWLCVSTIGFGFVL. Residues 104–115 are Lumenal-facing; that stretch reads DMGFFETIKLLL. The helical transmembrane segment at 116–136 threads the bilayer; sequence WVVFIDCVGVGLLISTLMWFI. The Cytoplasmic portion of the chain corresponds to 137-163; sequence SNKYLVKRQSRDYDVEWGYAFDVHLNA. The helical transmembrane segment at 164-184 threads the bilayer; it reads FYPLLVILHFIQLFFINHVIL. At 185-187 the chain is on the lumenal side; the sequence is TDT. The chain crosses the membrane as a helical span at residues 188-208; that stretch reads FIGYLVGNTLWLIAVGYYIYV. Topologically, residues 209 to 222 are cytoplasmic; the sequence is TFLGYSALPFLKNT. Residues 223 to 243 form a helical membrane-spanning segment; it reads VVLLYPFAPLIVLYGLSLALG. The Lumenal portion of the chain corresponds to 244 to 259; it reads WNFTHTLCSFYKYRVK.

The protein belongs to the unc-50 family. As to expression, expressed in brain, kidney and testis, and at lower levels in heart.

Its subcellular location is the nucleus inner membrane. The protein localises to the golgi apparatus membrane. In terms of biological role, involved in the cell surface expression of neuronal nicotinic receptors. Binds RNA. This Rattus norvegicus (Rat) protein is Protein unc-50 homolog (Unc50).